A 427-amino-acid polypeptide reads, in one-letter code: UPF0597 protein FN1147 (427 aa).

This sequence belongs to the UPF0597 family.

This is UPF0597 protein FN1147 from Fusobacterium nucleatum subsp. nucleatum (strain ATCC 25586 / DSM 15643 / BCRC 10681 / CIP 101130 / JCM 8532 / KCTC 2640 / LMG 13131 / VPI 4355).